We begin with the raw amino-acid sequence, 306 residues long: Cathepsin Z (306 aa).

A signal peptide spans 1–20 (MLAILFNFFLLTYFTNITLG). Positions 21–65 (KVGKSIDLDTRNGYNVHGCYKQTGKIYAHKTYPRQYEAENYNFDD) are cleaved as a propeptide — activation peptide. 5 disulfide bridges follow: C39–C96, C93–C136, C130–C168, C158–C174, and C177–C182. The active site involves C96. N-linked (GlcNAc...) asparagine glycosylation occurs at N187. A disulfide bridge connects residues C217 and C299. Active-site residues include H243 and N265. Residue N286 is glycosylated (N-linked (GlcNAc...) asparagine).

It belongs to the peptidase C1 family.

It is found in the cytoplasmic vesicle. Its subcellular location is the secretory vesicle. The protein localises to the secreted. It carries out the reaction Release of C-terminal amino acid residues with broad specificity, but lacks action on C-terminal proline. Shows weak endopeptidase activity.. With respect to regulation, the disulfide bridge formed between Cys-39 in the propeptide and the active site residue Cys-96 may prevent activation of the zymogen through formation of a reversible covalent bond with the active site residue. Exhibits carboxy-monopeptidase as well as carboxy-dipeptidase activity. Plays an essential role in molting, a process during larval stages in which a new cuticle is formed and the old cuticle is shed. Required for the degradation and shedding of the old cuticle. The protein is Cathepsin Z of Onchocerca volvulus.